A 465-amino-acid chain; its full sequence is METGFPAIMYPGSFIGGWGEEYLSWEGPGLPDFVFQQQPVESEAMHCSNPKSGVVLATVARGPDACQILTRAPLGQDPPQRTVLGLLTANGQYRRTCGQGITRIRCYSGSENAFPPAGKKALPDCGVQEPPKQGFDIYMDELEQGDRDSCSVREGMAFEDVYEVDTGTLKSDLHFLLDFNTVSPMLVDSSLLSQSEDISSLGTDVINVTEYAEEIYQYLREAEIRHRPKAHYMKKQPDITEGMRTILVDWLVEVGEEYKLRAETLYLAVNFLDRFLSCMSVLRGKLQLVGTAAMLLASKYEEIYPPEVDEFVYITDDTYTKRQLLKMEHLLLKVLAFDLTVPTTNQFLLQYLRRQGVCVRTENLAKYVAELSLLEADPFLKYLPSLIAAAAFCLANYTVNKHFWPETLAAFTGYSLSEIVPCLSELHKAYLDIPHRPQQAIREKYKASKYLCVSLMEPPAVLLLQ.

Belongs to the cyclin family. Cyclin AB subfamily. As to quaternary structure, interacts with the CDK2 and the CDC2 protein kinases to form a serine/threonine kinase holoenzyme complex. The cyclin subunit imparts substrate specificity to the complex. Does not bind CDK4 and CDK5 (in vitro). The cyclin A1-CDK2 complex interacts with transcription factor E2F-1 and RB proteins. Found in a complex with CDK2, CABLES1 and CCNE1. Interacts with INCA1. Interacts with KLHDC9. Post-translationally, polyubiquitinated via 'Lys-11'-linked ubiquitin by the anaphase-promoting complex (APC/C), leading to its degradation by the proteasome. Deubiquitinated and stabilized by USP37 enables entry into S phase. Ubiquitinated during the G1 phase by the SCF(FBXO31) complex, leading to its proteasomal degradation. As to expression, very high levels in testis and very low levels in brain. Also found in myeloid leukemia cell lines.

Its subcellular location is the nucleus. In terms of biological role, may be involved in the control of the cell cycle at the G1/S (start) and G2/M (mitosis) transitions. May primarily function in the control of the germline meiotic cell cycle and additionally in the control of mitotic cell cycle in some somatic cells. This chain is Cyclin-A1 (CCNA1), found in Homo sapiens (Human).